A 390-amino-acid chain; its full sequence is Heparan sulfate glucosamine 3-O-sulfotransferase 3B1 (390 aa).

The disordered stretch occupies residues 1–25 (MGQRLSGGRSCLDVPGRLLPQPPPP). The Cytoplasmic portion of the chain corresponds to 1-32 (MGQRLSGGRSCLDVPGRLLPQPPPPPPPVRRK). A helical; Signal-anchor for type II membrane protein transmembrane segment spans residues 33–53 (LALLFAMLCVWLYMFLYSCAG). Residues 54–390 (SCAAAPGLLL…QMTGHDFGWD (337 aa)) are Lumenal-facing. Positions 74-133 (PPALATAPDGTPPRLPFRAPPATPLASGKEMAEGAASPEEQSPEVPDSPSPISSFFSGSG) are disordered. The span at 83 to 96 (GTPPRLPFRAPPAT) shows a compositional bias: pro residues. The span at 123-133 (SPISSFFSGSG) shows a compositional bias: low complexity. 3'-phosphoadenylyl sulfate is bound at residue 147–151 (KGGTR). Substrate-binding positions include 169 to 175 (EPHFFDR) and 200 to 203 (KTPS). R228 and S236 together coordinate 3'-phosphoadenylyl sulfate. Residue N258 is glycosylated (N-linked (GlcNAc...) asparagine). Position 268-269 (268-269 (WS)) interacts with substrate. N329 is a glycosylation site (N-linked (GlcNAc...) asparagine). A disulfide bridge connects residues C336 and C348. 3'-phosphoadenylyl sulfate is bound at residue 353–357 (KGRTH).

Belongs to the sulfotransferase 1 family. Ubiquitous. Most abundant in liver and placenta, followed by heart and kidney.

The protein resides in the golgi apparatus membrane. It carries out the reaction alpha-D-glucosaminyl-[heparan sulfate](n) + 3'-phosphoadenylyl sulfate = 3-sulfo-alpha-D-glucosaminyl-[heparan sulfate](n) + adenosine 3',5'-bisphosphate + H(+). Its function is as follows. Sulfotransferase that utilizes 3'-phospho-5'-adenylyl sulfate (PAPS) to catalyze the transfer of a sulfo group to an N-unsubstituted glucosamine linked to a 2-O-sulfo iduronic acid unit on heparan sulfate. Catalyzes the O-sulfation of glucosamine in IdoUA2S-GlcNS and also in IdoUA2S-GlcNH2. The substrate-specific O-sulfation generates an enzyme-modified heparan sulfate which acts as a binding receptor to Herpes simplex virus-1 (HSV-1) and permits its entry. Unlike HS3ST1/3-OST-1, does not convert non-anticoagulant heparan sulfate to anticoagulant heparan sulfate. The polypeptide is Heparan sulfate glucosamine 3-O-sulfotransferase 3B1 (HS3ST3B1) (Homo sapiens (Human)).